Here is a 181-residue protein sequence, read N- to C-terminus: CDP-diacylglycerol--glycerol-3-phosphate 3-phosphatidyltransferase (181 aa).

4 consecutive transmembrane segments (helical) span residues 8–28 (PNYLTIARIAAIPVIILTFYI), 35–55 (MLGALLFVLASITDFFDGYIA), 64–84 (FGKMLDPIADKLLVGCVIIML), and 148–168 (IIYLDLVGEIILWIAAFLTII).

This sequence belongs to the CDP-alcohol phosphatidyltransferase class-I family.

Its subcellular location is the cell membrane. The enzyme catalyses a CDP-1,2-diacyl-sn-glycerol + sn-glycerol 3-phosphate = a 1,2-diacyl-sn-glycero-3-phospho-(1'-sn-glycero-3'-phosphate) + CMP + H(+). It functions in the pathway phospholipid metabolism; phosphatidylglycerol biosynthesis; phosphatidylglycerol from CDP-diacylglycerol: step 1/2. Functionally, this protein catalyzes the committed step to the synthesis of the acidic phospholipids. This is CDP-diacylglycerol--glycerol-3-phosphate 3-phosphatidyltransferase (pgsA) from Rickettsia bellii (strain RML369-C).